The primary structure comprises 318 residues: Pantothenate kinase (318 aa).

96–103 (GSVAVGKS) provides a ligand contact to ATP.

It belongs to the prokaryotic pantothenate kinase family.

The protein localises to the cytoplasm. The catalysed reaction is (R)-pantothenate + ATP = (R)-4'-phosphopantothenate + ADP + H(+). It functions in the pathway cofactor biosynthesis; coenzyme A biosynthesis; CoA from (R)-pantothenate: step 1/5. The sequence is that of Pantothenate kinase from Coxiella burnetii (strain RSA 493 / Nine Mile phase I).